The primary structure comprises 94 residues: Co-chaperonin GroES (94 aa).

It belongs to the GroES chaperonin family. In terms of assembly, heptamer of 7 subunits arranged in a ring. Interacts with the chaperonin GroEL.

It is found in the cytoplasm. In terms of biological role, together with the chaperonin GroEL, plays an essential role in assisting protein folding. The GroEL-GroES system forms a nano-cage that allows encapsulation of the non-native substrate proteins and provides a physical environment optimized to promote and accelerate protein folding. GroES binds to the apical surface of the GroEL ring, thereby capping the opening of the GroEL channel. This chain is Co-chaperonin GroES, found in Geobacillus sp. (strain WCH70).